A 623-amino-acid polypeptide reads, in one-letter code: Dictomallein-5 (623 aa).

The first 21 residues, 1-21 (MKIFIIKIILVLFNYVLLSYS), serve as a signal peptide directing secretion. In terms of domain architecture, Peptidase M66 spans 174–435 (PNVGQDYTLK…QNYFKNSIYY (262 aa)). Histidine 327 is a Zn(2+) binding site. Glutamate 328 is an active-site residue. Zn(2+) contacts are provided by histidine 331 and histidine 337.

The protein belongs to the dictomallein family. Zn(2+) serves as cofactor.

The protein resides in the secreted. In Dictyostelium discoideum (Social amoeba), this protein is Dictomallein-5 (dtmlE).